The following is a 31-amino-acid chain: Photosystem II reaction center protein T (31 aa).

A helical membrane pass occupies residues 3–23; it reads SFAYILILAFSIGTLFFAIAL.

It belongs to the PsbT family. As to quaternary structure, PSII is composed of 1 copy each of membrane proteins PsbA, PsbB, PsbC, PsbD, PsbE, PsbF, PsbH, PsbI, PsbJ, PsbK, PsbL, PsbM, PsbT, PsbX, PsbY, PsbZ, Psb30/Ycf12, peripheral proteins PsbO, CyanoQ (PsbQ), PsbU, PsbV and a large number of cofactors. It forms dimeric complexes.

The protein resides in the cellular thylakoid membrane. Found at the monomer-monomer interface of the photosystem II (PS II) dimer, plays a role in assembly and dimerization of PSII. PSII is a light-driven water plastoquinone oxidoreductase, using light energy to abstract electrons from H(2)O, generating a proton gradient subsequently used for ATP formation. This Synechococcus sp. (strain RCC307) protein is Photosystem II reaction center protein T.